We begin with the raw amino-acid sequence, 308 residues long: Ornithine carbamoyltransferase (308 aa).

Residues 53-56, Q80, R104, and 131-134 contribute to the carbamoyl phosphate site; these read STRT and HPCQ. L-ornithine contacts are provided by residues N162, D225, and 229 to 230; that span reads SM. Carbamoyl phosphate is bound by residues 265 to 266 and R293; that span reads CL.

The protein belongs to the aspartate/ornithine carbamoyltransferase superfamily. OTCase family.

The protein resides in the cytoplasm. It catalyses the reaction carbamoyl phosphate + L-ornithine = L-citrulline + phosphate + H(+). The protein operates within amino-acid biosynthesis; L-arginine biosynthesis; L-arginine from L-ornithine and carbamoyl phosphate: step 1/3. Its function is as follows. Reversibly catalyzes the transfer of the carbamoyl group from carbamoyl phosphate (CP) to the N(epsilon) atom of ornithine (ORN) to produce L-citrulline. In Synechocystis sp. (strain ATCC 27184 / PCC 6803 / Kazusa), this protein is Ornithine carbamoyltransferase (argF).